Here is a 318-residue protein sequence, read N- to C-terminus: Acetyl-coenzyme A carboxylase carboxyl transferase subunit alpha (318 aa).

The CoA carboxyltransferase C-terminal domain occupies 38-292; that stretch reads ALDRKAEEML…GEAIAAMLGE (255 aa).

Belongs to the AccA family. In terms of assembly, acetyl-CoA carboxylase is a heterohexamer composed of biotin carboxyl carrier protein (AccB), biotin carboxylase (AccC) and two subunits each of ACCase subunit alpha (AccA) and ACCase subunit beta (AccD).

It localises to the cytoplasm. The catalysed reaction is N(6)-carboxybiotinyl-L-lysyl-[protein] + acetyl-CoA = N(6)-biotinyl-L-lysyl-[protein] + malonyl-CoA. The protein operates within lipid metabolism; malonyl-CoA biosynthesis; malonyl-CoA from acetyl-CoA: step 1/1. Its function is as follows. Component of the acetyl coenzyme A carboxylase (ACC) complex. First, biotin carboxylase catalyzes the carboxylation of biotin on its carrier protein (BCCP) and then the CO(2) group is transferred by the carboxyltransferase to acetyl-CoA to form malonyl-CoA. In Paracoccus denitrificans (strain Pd 1222), this protein is Acetyl-coenzyme A carboxylase carboxyl transferase subunit alpha.